A 682-amino-acid chain; its full sequence is Cyclic nucleotide-gated cation channel (682 aa).

The interval 1-41 (MTGQAALERSVSSHRLSVRSRLEGEAERAESAISRTDGDDD) is disordered. At 1–136 (MTGQAALERS…EGFVVSQSDD (136 aa)) the chain is on the cytoplasmic side. Residues 20-30 (SRLEGEAERAE) are compositionally biased toward basic and acidic residues. Residues 137 to 157 (IYYYWLFFIALASLYNWIMLV) form a helical membrane-spanning segment. Topologically, residues 158–169 (ARACFDQLQDEN) are extracellular. The chain crosses the membrane as a helical span at residues 170 to 190 (FFLWVGLDYLCDVIYILDTCI). The Cytoplasmic portion of the chain corresponds to 191–218 (RLRTGYLEQGLLVKDLAKLRDNYIRTLQ). The helical transmembrane segment at 219–239 (FKLDFLSILPTELLFFVTGYV) threads the bilayer. The Extracellular portion of the chain corresponds to 240 to 272 (PQLRFNRLLRFSRMFEFFDRTETRTNYPNAFRI). A helical membrane pass occupies residues 273–293 (CNLILYILVIIHWNACIYYAI). Topologically, residues 294–311 (SKALGLSSDTWVYSGQNK) are cytoplasmic. A helical membrane pass occupies residues 312 to 332 (TLSFCYVYCFYWSTLTLTTIG). At 333 to 343 (EMPPPVKDEEY) the chain is on the extracellular side. Residues 344 to 364 (VFVVFDFLVGVLIFATIVGNV) traverse the membrane as a helical segment. Over 365-682 (GSMIANMNAT…SAETNSEEET (318 aa)) the chain is Cytoplasmic. 3',5'-cyclic AMP contacts are provided by residues 455–577 (LLVE…QGLL), Glu514, and Arg529. Positions 649-682 (GEHAGVPTHTHADIHAQPETHTRTSAETNSEEET) are disordered. A compositionally biased stretch (basic and acidic residues) spans 658–672 (THADIHAQPETHTRT).

This sequence belongs to the cyclic nucleotide-gated cation channel (TC 1.A.1.5) family. Olfactory neurons.

It is found in the membrane. This cyclic nucleotide-gated channel is activated equally well by both cAMP and cGMP. This chain is Cyclic nucleotide-gated cation channel, found in Ictalurus punctatus (Channel catfish).